The chain runs to 1238 residues: Anion exchange protein 2 (1238 aa).

The segment at 1 to 238 (MSGTPRRPAS…YNLQERRRIG (238 aa)) is disordered. Residues 1–704 (MSGTPRRPAS…SDFRDALDPQ (704 aa)) are Cytoplasmic-facing. Composition is skewed to basic and acidic residues over residues 37–49 (DLHRTLGVERFEE) and 58–75 (GGEELGRSYGEEDFEYHR). Composition is skewed to basic residues over residues 76–85 (QSSHHIHHPL) and 94–110 (RRRKTPQGQVRKPRRRP). Positions 120-133 (TIEEGEEDEDETSE) are enriched in acidic residues. A phosphoserine mark is found at Ser132, Ser144, Ser170, and Ser172. Residues 141-154 (TDPSPASTPTSVQF) show a composition bias toward polar residues. Residues 205–215 (GTAGGDDGGAS) are compositionally biased toward gly residues. Phosphoserine is present on Ser239. Thr253 bears the Phosphothreonine mark. An N6-methyllysine modification is found at Lys270. A disordered region spans residues 277–315 (VPGVRRHLVRKNAKGSSQSSREGREPGPTPRTRPRAPHK). Basic residues predominate over residues 280-289 (VRRHLVRKNA). Ser439 is subject to Phosphoserine. The disordered stretch occupies residues 445-466 (SLLGHHHTQGAESDPHVTEPLI). A run of 4 helical transmembrane segments spans residues 705–728 (CLAAVIFIYFAALSPAITFGGLLG), 734–771 (LIGVSELIMSTALQGVTFCLLGAQPLLVIGFSGPLLVF), 791–813 (VWIGFWLVLSALLMVALEGSFLV), and 823–844 (IFAFLISLIFIYETFYKLVKIF). The segment at 705–1238 (CLAAVIFIYF…DEYNEMPMPV (534 aa)) is membrane (anion exchange). Residues 845–897 (QEHPLHGCLASNSSEADGGKNTTWTEAAPTPGHGNTSSAEQAGVERPQGQPNT) are Extracellular-facing. Asn856, Asn865, and Asn879 each carry an N-linked (GlcNAc...) asparagine glycan. Over residues 858–869 (SEADGGKNTTWT) the composition is skewed to polar residues. The disordered stretch occupies residues 858–892 (SEADGGKNTTWTEAAPTPGHGNTSSAEQAGVERPQ). The helical transmembrane segment at 898 to 915 (ALLSLVLMAGTFFIAFFL) threads the bilayer. At 916–930 (RKFKNSRFFPGRIRR) the chain is on the cytoplasmic side. 5 helical membrane-spanning segments follow: residues 931–951 (VIGDFGVPIAILIMVLVDYSI), 985–1007 (PFPVWMMVASLLPAILVFILIFM), 1033–1054 (LLLIVAMGGICALFGLLWLAAA), 1088–1133 (VTGL…IQFY), and 1160–1196 (MHLFKALQLLCLALLWAVMSTAASLAFPFILILTVPL). Cys1170 carries the S-palmitoyl cysteine lipid modification.

It belongs to the anion exchanger (TC 2.A.31) family. Expressed in the cochlea (at protein level).

It localises to the apical cell membrane. The protein resides in the basolateral cell membrane. It carries out the reaction hydrogencarbonate(in) + chloride(out) = hydrogencarbonate(out) + chloride(in). Functionally, sodium-independent anion exchanger which mediates the electroneutral exchange of chloride for bicarbonate ions across the cell membrane. Plays an important role in osteoclast differentiation and function. Regulates bone resorption and calpain-dependent actin cytoskeleton organization in osteoclasts via anion exchange-dependent control of pH. Essential for intracellular pH regulation in CD8(+) T-cells upon CD3 stimulation, modulating CD8(+) T-cell response. The sequence is that of Anion exchange protein 2 (SLC4A2) from Cavia porcellus (Guinea pig).